The sequence spans 282 residues: 1D-myo-inositol 2-acetamido-2-deoxy-alpha-D-glucopyranoside deacetylase (282 aa).

Zn(2+)-binding residues include histidine 6, aspartate 9, and histidine 141.

Belongs to the MshB deacetylase family. Zn(2+) is required as a cofactor.

The catalysed reaction is 1D-myo-inositol 2-acetamido-2-deoxy-alpha-D-glucopyranoside + H2O = 1D-myo-inositol 2-amino-2-deoxy-alpha-D-glucopyranoside + acetate. Its function is as follows. Catalyzes the deacetylation of 1D-myo-inositol 2-acetamido-2-deoxy-alpha-D-glucopyranoside (GlcNAc-Ins) in the mycothiol biosynthesis pathway. The protein is 1D-myo-inositol 2-acetamido-2-deoxy-alpha-D-glucopyranoside deacetylase of Nocardiopsis dassonvillei (strain ATCC 23218 / DSM 43111 / CIP 107115 / JCM 7437 / KCTC 9190 / NBRC 14626 / NCTC 10488 / NRRL B-5397 / IMRU 509) (Actinomadura dassonvillei).